Here is a 1199-residue protein sequence, read N- to C-terminus: DNA-directed RNA polymerase subunit beta' (1199 aa).

Positions 60, 62, 75, and 78 each coordinate Zn(2+). 3 residues coordinate Mg(2+): aspartate 449, aspartate 451, and aspartate 453. Zn(2+) contacts are provided by cysteine 818, cysteine 892, cysteine 899, and cysteine 902.

This sequence belongs to the RNA polymerase beta' chain family. The RNAP catalytic core consists of 2 alpha, 1 beta, 1 beta' and 1 omega subunit. When a sigma factor is associated with the core the holoenzyme is formed, which can initiate transcription. Mg(2+) serves as cofactor. Zn(2+) is required as a cofactor.

The catalysed reaction is RNA(n) + a ribonucleoside 5'-triphosphate = RNA(n+1) + diphosphate. Functionally, DNA-dependent RNA polymerase catalyzes the transcription of DNA into RNA using the four ribonucleoside triphosphates as substrates. In Geobacillus kaustophilus (strain HTA426), this protein is DNA-directed RNA polymerase subunit beta'.